Here is a 75-residue protein sequence, read N- to C-terminus: Small ribosomal subunit protein bS18 (75 aa).

The protein belongs to the bacterial ribosomal protein bS18 family. Part of the 30S ribosomal subunit. Forms a tight heterodimer with protein bS6.

Binds as a heterodimer with protein bS6 to the central domain of the 16S rRNA, where it helps stabilize the platform of the 30S subunit. The chain is Small ribosomal subunit protein bS18 from Shewanella denitrificans (strain OS217 / ATCC BAA-1090 / DSM 15013).